The primary structure comprises 1149 residues: Structural maintenance of chromosomes protein 6 homolog smc-6 (1149 aa).

Residue 77 to 84 coordinates ATP; the sequence is GPNGSGKS. Residues 309-460 are a coiled coil; sequence LQDETKKEYA…EEEKYTIQRD (152 aa). The tract at residues 461–687 is flexible hinge; it reads INQLRRKIEQ…DVDEGALARL (227 aa). Residues 714-920 adopt a coiled-coil conformation; that stretch reads YNERDQTKAA…AVDRATVGCD (207 aa). 2 disordered regions span residues 875–900 and 1026–1060; these read NDKK…STTE and EVDE…VRDL. Acidic residues predominate over residues 1026 to 1038; the sequence is EVDEHSYDDDSDD. Residues 1042–1058 are compositionally biased toward basic residues; that stretch reads PRRKKSKKSGQKKKRVR.

Belongs to the SMC family. SMC6 subfamily. Interacts with smc-5. Expressed in the germline (at protein level).

The protein localises to the nucleus. The protein resides in the chromosome. Its function is as follows. Core component of the smc-5/smc-6 complex. Involved in DNA double-strand break repair by promoting sister-chromatid homologous recombination during meiosis. Also plays a role in the DNA damage repair of ultraviolet (UV) radiation-induced DNA lesions. Promotes efficient DNA replication. This chain is Structural maintenance of chromosomes protein 6 homolog smc-6, found in Caenorhabditis elegans.